Consider the following 220-residue polypeptide: ATP-dependent Clp protease proteolytic subunit (220 aa).

Serine 125 functions as the Nucleophile in the catalytic mechanism. Histidine 150 is an active-site residue.

It belongs to the peptidase S14 family. In terms of assembly, fourteen ClpP subunits assemble into 2 heptameric rings which stack back to back to give a disk-like structure with a central cavity, resembling the structure of eukaryotic proteasomes.

It localises to the cytoplasm. It carries out the reaction Hydrolysis of proteins to small peptides in the presence of ATP and magnesium. alpha-casein is the usual test substrate. In the absence of ATP, only oligopeptides shorter than five residues are hydrolyzed (such as succinyl-Leu-Tyr-|-NHMec, and Leu-Tyr-Leu-|-Tyr-Trp, in which cleavage of the -Tyr-|-Leu- and -Tyr-|-Trp bonds also occurs).. Functionally, cleaves peptides in various proteins in a process that requires ATP hydrolysis. Has a chymotrypsin-like activity. Plays a major role in the degradation of misfolded proteins. This chain is ATP-dependent Clp protease proteolytic subunit, found in Bacteroides thetaiotaomicron (strain ATCC 29148 / DSM 2079 / JCM 5827 / CCUG 10774 / NCTC 10582 / VPI-5482 / E50).